Here is a 513-residue protein sequence, read N- to C-terminus: Cytochrome P450 1A2 (513 aa).

Serine 68 carries an O-linked (GlcNAc) serine glycan. Cysteine 456 lines the heme pocket.

This sequence belongs to the cytochrome P450 family. As to quaternary structure, interacts with PGRMC1; the interaction requires PGRMC1 homodimerization. The cofactor is heme.

The protein localises to the endoplasmic reticulum membrane. It localises to the microsome membrane. The catalysed reaction is an organic molecule + reduced [NADPH--hemoprotein reductase] + O2 = an alcohol + oxidized [NADPH--hemoprotein reductase] + H2O + H(+). It catalyses the reaction 17beta-estradiol + reduced [NADPH--hemoprotein reductase] + O2 = 2-hydroxy-17beta-estradiol + oxidized [NADPH--hemoprotein reductase] + H2O + H(+). The enzyme catalyses 17beta-estradiol + reduced [NADPH--hemoprotein reductase] + O2 = 4-hydroxy-17beta-estradiol + oxidized [NADPH--hemoprotein reductase] + H2O + H(+). It carries out the reaction estrone + reduced [NADPH--hemoprotein reductase] + O2 = 2-hydroxyestrone + oxidized [NADPH--hemoprotein reductase] + H2O + H(+). The catalysed reaction is estrone + reduced [NADPH--hemoprotein reductase] + O2 = 4-hydroxyestrone + oxidized [NADPH--hemoprotein reductase] + H2O + H(+). It catalyses the reaction cholesterol + reduced [NADPH--hemoprotein reductase] + O2 = 25-hydroxycholesterol + oxidized [NADPH--hemoprotein reductase] + H2O + H(+). The enzyme catalyses all-trans-retinol + reduced [NADPH--hemoprotein reductase] + O2 = all-trans-retinal + oxidized [NADPH--hemoprotein reductase] + 2 H2O + H(+). It carries out the reaction all-trans-retinal + reduced [NADPH--hemoprotein reductase] + O2 = all-trans-retinoate + oxidized [NADPH--hemoprotein reductase] + H2O + 2 H(+). The catalysed reaction is (5Z,8Z,11Z,14Z)-eicosatetraenoate + reduced [NADPH--hemoprotein reductase] + O2 = (14R,15S)-epoxy-(5Z,8Z,11Z)-eicosatrienoate + oxidized [NADPH--hemoprotein reductase] + H2O + H(+). It catalyses the reaction (5Z,8Z,11Z,14Z)-eicosatetraenoate + reduced [NADPH--hemoprotein reductase] + O2 = (14S,15R)-epoxy-(5Z,8Z,11Z)-eicosatrienoate + oxidized [NADPH--hemoprotein reductase] + H2O + H(+). The enzyme catalyses (5Z,8Z,11Z,14Z,17Z)-eicosapentaenoate + reduced [NADPH--hemoprotein reductase] + O2 = (17R,18S)-epoxy-(5Z,8Z,11Z,14Z)-eicosatetraenoate + oxidized [NADPH--hemoprotein reductase] + H2O + H(+). It carries out the reaction (4Z,7Z,10Z,13Z,16Z,19Z)-docosahexaenoate + reduced [NADPH--hemoprotein reductase] + O2 = (19R,20S)-epoxy-(4Z,7Z,10Z,13Z,16Z)-docosapentaenoate + oxidized [NADPH--hemoprotein reductase] + H2O + H(+). The catalysed reaction is (5S)-hydroperoxy-(6E,8Z,11Z,14Z)-eicosatetraenoate = 5-oxo-(6E,8Z,11Z,14Z)-eicosatetraenoate + H2O. It catalyses the reaction (12S)-hydroperoxy-(5Z,8Z,10E,14Z)-eicosatetraenoate = 12-oxo-(5Z,8Z,10E,14Z)-eicosatetraenoate + H2O. The enzyme catalyses (15S)-hydroperoxy-(5Z,8Z,11Z,13E)-eicosatetraenoate = 15-oxo-(5Z,8Z,11Z,13E)-eicosatetraenoate + H2O. It carries out the reaction (13S)-hydroperoxy-(9Z,11E)-octadecadienoate = 13-oxo-(9Z,11E)-octadecadienoate + H2O. The catalysed reaction is (5Z,8Z,11Z,14Z)-eicosatetraenoate + reduced [NADPH--hemoprotein reductase] + O2 = 13-hydroxy-(5Z,8Z,11Z,14Z)-eicosatetraenoate + oxidized [NADPH--hemoprotein reductase] + H2O + H(+). It catalyses the reaction (5Z,8Z,11Z,14Z)-eicosatetraenoate + reduced [NADPH--hemoprotein reductase] + O2 = 19-hydroxy-(5Z,8Z,11Z,14Z)-eicosatetraenoate + oxidized [NADPH--hemoprotein reductase] + H2O + H(+). The enzyme catalyses (9Z,12Z)-octadecadienoate + reduced [NADPH--hemoprotein reductase] + O2 = 11-hydroxy-(9Z,12Z)-octadecadienoate + oxidized [NADPH--hemoprotein reductase] + H2O + H(+). Its pathway is cofactor metabolism; retinol metabolism. It participates in steroid metabolism; cholesterol metabolism. It functions in the pathway lipid metabolism; arachidonate metabolism. Its function is as follows. A cytochrome P450 monooxygenase involved in the metabolism of various endogenous substrates, including fatty acids, steroid hormones and vitamins. Mechanistically, uses molecular oxygen inserting one oxygen atom into a substrate, and reducing the second into a water molecule, with two electrons provided by NADPH via cytochrome P450 reductase (NADPH--hemoprotein reductase). Catalyzes the hydroxylation of carbon-hydrogen bonds. Exhibits high catalytic activity for the formation of hydroxyestrogens from estrone (E1) and 17beta-estradiol (E2), namely 2-hydroxy E1 and E2. Metabolizes cholesterol toward 25-hydroxycholesterol, a physiological regulator of cellular cholesterol homeostasis. May act as a major enzyme for all-trans retinoic acid biosynthesis in the liver. Catalyzes two successive oxidative transformation of all-trans retinol to all-trans retinal and then to the active form all-trans retinoic acid. Primarily catalyzes stereoselective epoxidation of the last double bond of polyunsaturated fatty acids (PUFA), displaying a strong preference for the (R,S) stereoisomer. Catalyzes bisallylic hydroxylation and omega-1 hydroxylation of PUFA. May also participate in eicosanoids metabolism by converting hydroperoxide species into oxo metabolites (lipoxygenase-like reaction, NADPH-independent). Plays a role in the oxidative metabolism of xenobiotics. Catalyzes the N-hydroxylation of heterocyclic amines and the O-deethylation of phenacetin. Metabolizes caffeine via N3-demethylation. This chain is Cytochrome P450 1A2 (Cyp1a2), found in Rattus norvegicus (Rat).